Here is a 326-residue protein sequence, read N- to C-terminus: uncharacterized protein (326 aa).

The active-site Proton donor is the Tyr53. 215–225 (SPLAGGLLGGK) lines the NADP(+) pocket. Positions 242 to 305 (IEKHRLQLEK…AVEISLDKEI (64 aa)) form a coiled coil.

This sequence belongs to the aldo/keto reductase family. Aldo/keto reductase 2 subfamily.

This is an uncharacterized protein from Bacillus subtilis (strain 168).